Reading from the N-terminus, the 258-residue chain is Phosphate import ATP-binding protein PstB (258 aa).

An ABC transporter domain is found at 5–253 (LDLNDVNIYY…PTKKETEDYI (249 aa)). 37 to 44 (GPSGCGKS) is a binding site for ATP.

It belongs to the ABC transporter superfamily. Phosphate importer (TC 3.A.1.7) family. In terms of assembly, the complex is composed of two ATP-binding proteins (PstB), two transmembrane proteins (PstC and PstA) and a solute-binding protein (PstS).

It is found in the cell membrane. It carries out the reaction phosphate(out) + ATP + H2O = ADP + 2 phosphate(in) + H(+). In terms of biological role, part of the ABC transporter complex PstSACB involved in phosphate import. Responsible for energy coupling to the transport system. This Corynebacterium jeikeium (strain K411) protein is Phosphate import ATP-binding protein PstB.